We begin with the raw amino-acid sequence, 300 residues long: Protein SPEAR2 (300 aa).

The segment covering Met1 to Ser11 has biased composition (polar residues). The disordered stretch occupies residues Met1 to Pro64. Over residues Cys25–Gly38 the composition is skewed to basic residues. The SPL signature appears at Arg37 to Glu45. The span at Glu43–Lys54 shows a compositional bias: basic and acidic residues. Residues Pro55 to Pro64 show a composition bias toward low complexity. An EAR motif is present at residues Ile294 to Leu300.

In terms of assembly, homodimer and heterodimer with SPL and SPEARs. Interacts with SPL, SPEAR1, SPEAR3 and SPEAR4. As to expression, expressed in leaves.

Its function is as follows. Adapter-like transcriptional repressor recruiting TPL/TPR corepressors to inhibit TCP transcription factors. May be involved in leaf development. The polypeptide is Protein SPEAR2 (Arabidopsis thaliana (Mouse-ear cress)).